We begin with the raw amino-acid sequence, 180 residues long: ATP-dependent protease subunit HslV (180 aa).

Thr-5 is a catalytic residue. 3 residues coordinate Na(+): Gly-165, Cys-168, and Thr-171.

The protein belongs to the peptidase T1B family. HslV subfamily. In terms of assembly, a double ring-shaped homohexamer of HslV is capped on each side by a ring-shaped HslU homohexamer. The assembly of the HslU/HslV complex is dependent on binding of ATP.

It is found in the cytoplasm. The enzyme catalyses ATP-dependent cleavage of peptide bonds with broad specificity.. Its activity is regulated as follows. Allosterically activated by HslU binding. Protease subunit of a proteasome-like degradation complex believed to be a general protein degrading machinery. This Helicobacter pylori (strain P12) protein is ATP-dependent protease subunit HslV.